Here is a 363-residue protein sequence, read N- to C-terminus: Neurogenic differentiation factor 2 (363 aa).

The tract at residues 1–116 (MLTRLFKEPS…VRRQKANARE (116 aa)) is disordered. A compositionally biased stretch (basic and acidic residues) spans 28-44 (EDSKTKDEEQERCRLGD). Positions 64 to 83 (AGEEDYDEDVDEDDCGEEGD) are enriched in acidic residues. Over residues 87 to 98 (PKKRGPKKRKMT) the composition is skewed to basic residues. The Nuclear localization signal motif lies at 93–99 (KKRKMTP). In terms of domain architecture, bHLH spans 107–159 (VRRQKANARERTRMHDLNSALDNLLKVVPCYSKTQKLSKIETLRLAKNYIWAL).

In terms of assembly, efficient DNA binding requires dimerization with another bHLH protein. In adult, expressed strongly in brain and more weakly in skin, muscle, eye and ovary.

It is found in the nucleus. Its function is as follows. Transcriptional regulator. Appears to mediate neuronal differentiation. The sequence is that of Neurogenic differentiation factor 2 from Danio rerio (Zebrafish).